The following is a 179-amino-acid chain: Lebocin-3 (179 aa).

A signal peptide spans 1–16 (MYKFLVFSSVLVLFFA). Positions 17 to 120 (QASCQRFIQP…QPIESHRNTR (104 aa)) are excised as a propeptide. Thr-135 is a glycosylation site (O-linked (GalNAc...) threonine). Residues 153–179 (RRHASEDQEELRQYNEHFLIPRDIFQE) constitute a propeptide that is removed on maturation.

This sequence belongs to the lebocin family. In terms of processing, O-glycosylation is important for the antibacterial activity of lebocin. As to expression, hemolymph. Produced in fat body.

It is found in the secreted. Antibacterial peptide. The polypeptide is Lebocin-3 (LEB3) (Bombyx mori (Silk moth)).